A 324-amino-acid polypeptide reads, in one-letter code: Myoblast determination protein 1 homolog (324 aa).

A disordered region spans residues 125–146 (VDSQHEDTTTSTAGGAGVGGPR). Residues 155 to 206 (DRRKAATMRERRRLRKVNEAFEVVKQRTCPNPNQRLPKVEILRSAIDYINNL) enclose the bHLH domain. The interval 251-272 (YNPENMFDDDDLTDSDDDRDHH) is disordered. The span at 256 to 267 (MFDDDDLTDSDD) shows a compositional bias: acidic residues.

Efficient DNA binding requires dimerization with another bHLH protein. In terms of tissue distribution, body wall muscle cells; in clonal muscle precursors, in a set of early embryonic blastomeres (the ms-granddaughters), and in six glial-like cells called GLRS.

It localises to the nucleus. In terms of biological role, involved in myogenesis, in cooperation with transcription factors unc-120 and hnd-1. Acts redundantly with fozi-1 to promote body wall muscle cell and coelomocyte specification in postembryonic mesoderm progenitors, probably through suppression of sem-2. The sequence is that of Myoblast determination protein 1 homolog from Caenorhabditis elegans.